The following is a 566-amino-acid chain: F-box/WD repeat-containing protein 5 (566 aa).

The region spanning 3 to 49 (EGGTPLLPDSLVYQIFLSLGPADVLAAGLVCRQWQAVSRDEFLWREQ) is the F-box domain. WD repeat units lie at residues 83–125 (VEVQ…DLTI), 126–178 (SLLH…LDSF), 179–238 (ALLS…VKRL), and 239–281 (FKIQ…RIFD). Ser151 is modified (phosphoserine; by PLK4). Ser284 is subject to Phosphoserine. A D-box motif is present at residues 303–311 (RHFLDRVLE). WD repeat units lie at residues 394-447 (ALDH…DLLV), 458-501 (RALR…RHYN), and 502-539 (ICLARLRHEDVVNSVVFSPQEQELLLTASDDATIKAWR).

Belongs to the FBXW5 family. As to quaternary structure, part of the SCF (SKP1-CUL1-F-box) E3 ubiquitin-protein ligase complex SCF(FBXW5) composed of CUL1, SKP1, RBX1 and FBXW5. Component of the DCX(FBXW5) E3 ubiquitin ligase complex, at least composed of (CUL4A or CUL4B), DDB1, FBXW5 and RBX1. Interacts with CDC20, EPS8, TSC1, TSC2 and SASS6. Interacts with TNFAIP8L1; TNFAIP8L1 competes with TSC2 to bind FBXW5 increasing TSC2 stability by preventing its ubiquitination. Phosphorylated at Ser-151 by PLK4 during the G1/S transition, leading to inhibit its ability to ubiquitinate SASS6. Post-translationally, ubiquitinated and degraded by the APC/C complex during mitosis and G1 phase.

It localises to the cytoplasm. Its pathway is protein modification; protein ubiquitination. Its function is as follows. Substrate recognition component of both SCF (SKP1-CUL1-F-box protein) and DCX (DDB1-CUL4-X-box) E3 ubiquitin-protein ligase complexes. Substrate recognition component of the SCF(FBXW5) E3 ubiquitin-protein ligase complex which mediates the ubiquitination and subsequent proteasomal degradation of SASS6 during S phase, leading to prevent centriole reduplication. The SCF(FBXW5) complex also mediates ubiquitination and degradation of actin-regulator EPS8 during G2 phase, leading to the transient degradation of EPS8 and subsequent cell shape changes required to allow mitotic progression. Substrate-specific adapter of the DCX(FBXW5) E3 ubiquitin-protein ligase complex which mediates the polyubiquitination and subsequent degradation of TSC2. May also act as a negative regulator of MAP3K7/TAK1 signaling in the interleukin-1B (IL1B) signaling pathway. This chain is F-box/WD repeat-containing protein 5 (FBXW5), found in Homo sapiens (Human).